The following is a 590-amino-acid chain: Protein I'm not dead yet (590 aa).

11 consecutive transmembrane segments (helical) span residues 43 to 63, 82 to 102, 115 to 135, 153 to 173, 224 to 244, 270 to 290, 329 to 349, 373 to 393, 457 to 477, 509 to 529, and 540 to 560; these read GLVV…NEGA, ALPL…MGIM, TLVM…CNLH, LHFG…NAAC, LCYY…TIIG, TFMF…FVFL, LGPM…MVVM, SMPT…YAFL, VLPN…LTAF, AGLA…NALV, and MAIA…VFCQ.

The protein belongs to the SLC13A/DASS transporter (TC 2.A.47) family. NADC subfamily. As to expression, in adults, abundantly expressed in the fat body, basolateral region of midgut cells and oenocytes. Low level expression is seen in the halteres, procardia, restricted regions of the esophagus and hindgut, base of the legs and in a subset of cells in the third segment of the antennae.

Its subcellular location is the basolateral cell membrane. Cation-independent electroneutral transporter (not associated with membrane depolarization) of a variety of tricarboxylic and dicarboxylic acid-cycle intermediates. There is also small, but detectable, transport of monocarboxylics. Transport is through the epithelium of the gut and across the plasma membranes of organs involved in intermediary metabolism and storage. Affinity for substrates is citrate &gt; succinate &gt; pyruvate. Fumarate, a-ketoglutarate, and glutarate are also transported, but not lactate. Transport mechanism that is not coupled to Na(+), K(+), or Cl(-). Function is shown in Xenopus oocytes and human retinal pigment epithelial (HRPE) cell lines. The sequence is that of Protein I'm not dead yet (Indy) from Drosophila melanogaster (Fruit fly).